We begin with the raw amino-acid sequence, 132 residues long: Large ribosomal subunit protein bL17 (132 aa).

It belongs to the bacterial ribosomal protein bL17 family. As to quaternary structure, part of the 50S ribosomal subunit. Contacts protein L32.

This is Large ribosomal subunit protein bL17 from Leptothrix cholodnii (strain ATCC 51168 / LMG 8142 / SP-6) (Leptothrix discophora (strain SP-6)).